A 247-amino-acid polypeptide reads, in one-letter code: Neurotrophic factor BDNF precursor form (247 aa).

An N-terminal signal peptide occupies residues 1–18 (MTILFLTMVISYFGCMKA). Residues 19 to 128 (APMKEANVRG…AANMSMRVRR (110 aa)) constitute a propeptide that is removed on maturation. An N-linked (GlcNAc...) asparagine glycan is attached at N121. Disulfide bonds link C141–C208, C186–C237, and C196–C239.

Belongs to the NGF-beta family. As to quaternary structure, monomers and homodimers. Binds to NTRK2/TRKB. Can form heterodimers with other neurotrophin family members, such as NTF3 and NTF4 (in vitro), but the physiological relevance of this is not clear. BDNF precursor form: interacts with the heterodimer formed by NGFR and SORCS2. Mature BDNF has much lower affinity for the heterodimer formed by NGFR and SORCS2. Post-translationally, N-glycosylated and glycosulfated, contrary to mature BDNF. Mature BDNF is produced by proteolytic removal of the propeptide, catalyzed by a FURIN family member. In addition, the precursor form is proteolytically cleaved within the propeptide, but this is not an obligatory intermediate for the production of mature BDNF. Can be converted into mature BDNF by plasmin (PLG).

Its subcellular location is the secreted. Its function is as follows. Important signaling molecule that activates signaling cascades downstream of NTRK2. During development, promotes the survival and differentiation of selected neuronal populations of the peripheral and central nervous systems. Participates in axonal growth, pathfinding and in the modulation of dendritic growth and morphology. Major regulator of synaptic transmission and plasticity at adult synapses in many regions of the CNS. The versatility of BDNF is emphasized by its contribution to a range of adaptive neuronal responses including long-term potentiation (LTP), long-term depression (LTD), certain forms of short-term synaptic plasticity, as well as homeostatic regulation of intrinsic neuronal excitability. In terms of biological role, important signaling molecule that activates signaling cascades downstream of NTRK2. Activates signaling cascades via the heterodimeric receptor formed by NGFR and SORCS2. Signaling via NGFR and SORCS2 plays a role in synaptic plasticity and long-term depression (LTD). Binding to NGFR and SORCS2 promotes neuronal apoptosis. Promotes neuronal growth cone collapse. This Helarctos malayanus (Malayan sun bear) protein is Neurotrophic factor BDNF precursor form (BDNF).